Reading from the N-terminus, the 353-residue chain is Photosystem II D2 protein (353 aa).

An N-acetylthreonine modification is found at threonine 2. Threonine 2 carries the phosphothreonine modification. The helical transmembrane segment at 41–61 (CAYFALGGWFTGTTFVTSWYT) threads the bilayer. Histidine 118 provides a ligand contact to chlorophyll a. A helical membrane pass occupies residues 125–141 (GFMLRQFELARSVQLRP). Pheophytin a contacts are provided by glutamine 130 and asparagine 143. The helical transmembrane segment at 153–166 (VFVSVFLIYPLGQS) threads the bilayer. Histidine 198 contributes to the chlorophyll a binding site. A helical transmembrane segment spans residues 208–228 (AALLCAIHGATVENTLFEDGD). Histidine 215 and phenylalanine 262 together coordinate a plastoquinone. Position 215 (histidine 215) interacts with Fe cation. Position 269 (histidine 269) interacts with Fe cation. Residues 279 to 295 (GLWMSAIGVVGLALNLR) form a helical membrane-spanning segment.

The protein belongs to the reaction center PufL/M/PsbA/D family. PSII is composed of 1 copy each of membrane proteins PsbA, PsbB, PsbC, PsbD, PsbE, PsbF, PsbH, PsbI, PsbJ, PsbK, PsbL, PsbM, PsbT, PsbX, PsbY, PsbZ, Psb30/Ycf12, at least 3 peripheral proteins of the oxygen-evolving complex and a large number of cofactors. It forms dimeric complexes. The cofactor is The D1/D2 heterodimer binds P680, chlorophylls that are the primary electron donor of PSII, and subsequent electron acceptors. It shares a non-heme iron and each subunit binds pheophytin, quinone, additional chlorophylls, carotenoids and lipids. There is also a Cl(-1) ion associated with D1 and D2, which is required for oxygen evolution. The PSII complex binds additional chlorophylls, carotenoids and specific lipids..

The protein resides in the plastid. The protein localises to the chloroplast thylakoid membrane. It catalyses the reaction 2 a plastoquinone + 4 hnu + 2 H2O = 2 a plastoquinol + O2. Photosystem II (PSII) is a light-driven water:plastoquinone oxidoreductase that uses light energy to abstract electrons from H(2)O, generating O(2) and a proton gradient subsequently used for ATP formation. It consists of a core antenna complex that captures photons, and an electron transfer chain that converts photonic excitation into a charge separation. The D1/D2 (PsbA/PsbD) reaction center heterodimer binds P680, the primary electron donor of PSII as well as several subsequent electron acceptors. D2 is needed for assembly of a stable PSII complex. The sequence is that of Photosystem II D2 protein from Phalaenopsis aphrodite subsp. formosana (Moth orchid).